The chain runs to 185 residues: Threonylcarbamoyl-AMP synthase (185 aa).

The 181-residue stretch at 5 to 185 (NWRVRLAARI…RDGRTGQRLR (181 aa)) folds into the YrdC-like domain.

This sequence belongs to the SUA5 family. TsaC subfamily.

It localises to the cytoplasm. The catalysed reaction is L-threonine + hydrogencarbonate + ATP = L-threonylcarbamoyladenylate + diphosphate + H2O. Functionally, required for the formation of a threonylcarbamoyl group on adenosine at position 37 (t(6)A37) in tRNAs that read codons beginning with adenine. Catalyzes the conversion of L-threonine, HCO(3)(-)/CO(2) and ATP to give threonylcarbamoyl-AMP (TC-AMP) as the acyladenylate intermediate, with the release of diphosphate. This is Threonylcarbamoyl-AMP synthase from Nitrosococcus oceani (strain ATCC 19707 / BCRC 17464 / JCM 30415 / NCIMB 11848 / C-107).